Here is a 558-residue protein sequence, read N- to C-terminus: Biotin biosynthesis bifunctional protein BioHC (558 aa).

A carboxylesterase region spans residues 1-287 (MSNIEPSNVK…FSQPAKIAQI (287 aa)). Residues Trp-56, 115-116 (SL), and 182-186 (FGLLQ) each bind substrate. Ser-115 functions as the Nucleophile in the catalytic mechanism. Catalysis depends on residues Asp-246 and His-274. His-274 serves as a coordination point for substrate. Residues 288-558 (MLARVHAKRN…EVGFYQLLKV (271 aa)) form a malonyl-ACP O-methyltransferase region.

It in the N-terminal section; belongs to the AB hydrolase superfamily. Carboxylesterase BioH family. In the C-terminal section; belongs to the methyltransferase superfamily.

It carries out the reaction a carboxylic ester + H2O = an alcohol + a carboxylate + H(+). The enzyme catalyses malonyl-[ACP] + S-adenosyl-L-methionine = malonyl-[ACP] methyl ester + S-adenosyl-L-homocysteine. The protein operates within cofactor biosynthesis; biotin biosynthesis. In terms of biological role, converts the free carboxyl group of a malonyl-thioester to its methyl ester by transfer of a methyl group from S-adenosyl-L-methionine (SAM). It allows to synthesize pimeloyl-ACP via the fatty acid synthetic pathway. Its function is as follows. The physiological role of BioH is to remove the methyl group introduced by BioC when the pimeloyl moiety is complete. It allows to synthesize pimeloyl-ACP via the fatty acid synthetic pathway through the hydrolysis of the ester bonds of pimeloyl-ACP esters. In Saccharophagus degradans (strain 2-40 / ATCC 43961 / DSM 17024), this protein is Biotin biosynthesis bifunctional protein BioHC (bioC).